The sequence spans 223 residues: Agamous-like MADS-box protein AGL11 (223 aa).

Residues 1–61 (MGRGKIEIKR…GRVYEYSNNN (61 aa)) enclose the MADS-box domain. Positions 87–177 (AQYYQQESAK…RTKIAEVERL (91 aa)) constitute a K-box domain.

In terms of tissue distribution, expressed in flowers and seeds. Expressed in endotesta cell layer of developing seeds.

It is found in the nucleus. Its function is as follows. Probable transcription factor involved in seed development. Plays a role in seed morphogenesis by promoting the correct development of endotesta cell layer, which directs the further development of the seed coat, the endosperm, and consequently the embryo. This is Agamous-like MADS-box protein AGL11 from Vitis vinifera (Grape).